The following is a 552-amino-acid chain: Glutathione reductase, chloroplastic/mitochondrial (552 aa).

A chloroplast and mitochondrion-targeting transit peptide spans 1 to 60 (MNQAMATPLSLSCCSPTLTRSTLFFTKTFPFSRSFSTPLPLSTKTLISLSPPHRTFAVRA). FAD-binding residues include Ser-83, Gly-84, Glu-103, Thr-120, Cys-121, and Lys-129. Glutathione is bound at residue Ser-83. A disulfide bridge connects residues Cys-121 and Cys-126. Tyr-178 contributes to the glutathione binding site. Gly-194 contributes to the FAD binding site. NADP(+)-binding residues include Gly-254, Ile-257, Glu-260, Arg-277, Arg-283, and Gly-341. 2 residues coordinate FAD: Asp-382 and Thr-390. Ala-420 provides a ligand contact to NADP(+). His-515 is an FAD binding site. The active-site Proton acceptor is the His-515. The disordered stretch occupies residues 527-552 (TPTRKVRKNQASQGKSDSKAKAVAGS).

The protein belongs to the class-I pyridine nucleotide-disulfide oxidoreductase family. Homodimer. It depends on FAD as a cofactor.

The protein localises to the plastid. It is found in the chloroplast. Its subcellular location is the mitochondrion. It catalyses the reaction 2 glutathione + NADP(+) = glutathione disulfide + NADPH + H(+). Catalyzes the reduction of glutathione disulfide (GSSG) to reduced glutathione (GSH). Maintains high levels of GSH in the chloroplast. This Pisum sativum (Garden pea) protein is Glutathione reductase, chloroplastic/mitochondrial (GR).